Consider the following 1556-residue polypeptide: MFAEGQIQKVPILGKESIHIGYKMQDHIVSEIVANIKSSTYILVTDTNIEDLGYVESLKTKFEAAFAKDGIKSRLLTYTVAPGETSKSRATKAAIEDWMLSKGCTRDTVILAVGGGVIGDMIGYVAATFMRGVRFVQIPTTLLAMVDSSIGGKTAIDTPLGKNLVGAFWQPVNIFIDTSFLETLPVREFINGMAEVIKTAAFYDAEEFTRLESASEIFLSTIKKRDAKDPRRVDLSPITDTIGRIVLGSARIKAAVVSADEREGGLRNLLNFGHSIGHAYEAILTPYILHGECVAIGMVKEAELSRYLGILSPVAVARLAKCIKAYELPVSLDDATVKARSHGKKCPVDDLLRIMGVDKKNDGSTKKIVILSAIGKTHEQKASSVADKDIRFVLSEEVIVGEAPVGDKKSYTVTPPGSKSISNRAFVLTALGKGPCKLRNLLHSDDTQHMLEAIELLGGASFEWEADGETLLVTGNGGKLTAPAQELYLGNAGTASRFLTTAATLVQKGDKDHVILTGNKRMQERPIGPLVDALRSNGADIAFQNAEGSLPLKIEAGVGLKGGLIEVAATVSSQYVSSLLMCAPYAQTPVTLSLVGGKPISQFYIDMTIAMMADFGVVVTKDETKEHTYHIPQGVYTNPEEYVVESDASSATYPLAYAAMTGHTVTVPNIGSKSLQGDARFAIDVLKAMGCTVEQTATSTTVTGVPNLKAIAVDMEPMTDAFLTACVVAAVSEGTTVITGIANQRVKECNRIEAMRVQLAKYGVVCRELEDGIEVDGISRSDLKTPVSVHSYDDHRVAMSFSLLSSIMAAPVAIEERRCVEKTWPGWWDVLSGVFNVPLEGVTLAKTVSKAESGLSKPSIFIVGMRGAGKTHLGAQAANHLGYEFIDLDQLLEKDLDTTIPQLIADKGWDHFRAEELRLLKQCLNDKSEGYVISCGGGVVETPAARDALQTFKGVGGIVLHVHRPVSRILEYLNKDQSRPAFVDDLEAVWQRRKELYRSVSSNVFFAPHCDSAEATAKVQQMLGAFLDRVTGKSEFVIPHKDQFTSFLSLTFPDVSIAATMLPSLSEGCSALELRVDLLNENDEAIPSEEYVLSQLAILRQNVDLPILYTVRTKAQGGRFPDDKPVELANLVNLGLKTAVELLDVELTYPAELVSSVGASRGYTKLLGSHHDFPGALNWSSLEWENMYARAEAVPVDVVKLVGMAKSFSDNFALENFREAHTSSPLLAINMGSHGQLSRVTNTLLTPVTHADLPVAAAPGQLSVEEINQTRSTIGMFNKNLSFFIVGTPIGHSKSPILHNTMFKKLGLPYEYSRFKTDDAAAVNAKARALLAQGNLGGISVTIPLKQDIIPFLDEVSPLAQQIGAVNTIIPGPNGTLKGDNTDILGLVNALTRFGANSLDKKTALIVGAGGTSLAAVHGLRSLGFAKILIANRTLSKAEAIADKFDNVEAVTLDSFVANKYTPSVIVSCVPATTFSMLDESNKLVSAALAASPKGLVLEAAYSAEATPLLKQVMDVEGWEFISGLYMLTEQGFEQFRLWTGIPAPKEVGEKAVLGN.

The tract at residues methionine 1–aspartate 387 is 3-dehydroquinate synthase. NAD(+)-binding positions include aspartate 46 to asparagine 48, glutamate 84 to lysine 87, glycine 115 to valine 117, and aspartate 120. Arginine 131 contacts 7-phospho-2-dehydro-3-deoxy-D-arabino-heptonate. Residue threonine 140–threonine 141 coordinates NAD(+). Residues aspartate 147 and lysine 153 each contribute to the 7-phospho-2-dehydro-3-deoxy-D-arabino-heptonate site. Lysine 162 contacts NAD(+). A 7-phospho-2-dehydro-3-deoxy-D-arabino-heptonate-binding site is contributed by asparagine 163. NAD(+)-binding positions include phenylalanine 180 to threonine 183 and asparagine 191. Position 195 (glutamate 195) interacts with Zn(2+). 7-phospho-2-dehydro-3-deoxy-D-arabino-heptonate contacts are provided by residues glutamate 195–lysine 198 and lysine 253. Glutamate 263 functions as the Proton acceptor; for 3-dehydroquinate synthase activity in the catalytic mechanism. 7-phospho-2-dehydro-3-deoxy-D-arabino-heptonate is bound by residues arginine 267–asparagine 271 and histidine 274. Residue histidine 274 coordinates Zn(2+). Residue histidine 278 is the Proton acceptor; for 3-dehydroquinate synthase activity of the active site. 7-phospho-2-dehydro-3-deoxy-D-arabino-heptonate contacts are provided by histidine 290 and lysine 359. Histidine 290 serves as a coordination point for Zn(2+). An EPSP synthase region spans residues valine 400–valine 837. The active-site For EPSP synthase activity is cysteine 819. The shikimate kinase stretch occupies residues proline 858–serine 1049. Glycine 864–threonine 871 is a binding site for ATP. A 3-dehydroquinase region spans residues leucine 1050 to glutamate 1266. The Proton acceptor; for 3-dehydroquinate dehydratase activity role is filled by histidine 1171. Lysine 1200 acts as the Schiff-base intermediate with substrate; for 3-dehydroquinate dehydratase activity in catalysis. Residues lysine 1279–asparagine 1556 form a shikimate dehydrogenase region.

It in the N-terminal section; belongs to the sugar phosphate cyclases superfamily. Dehydroquinate synthase family. The protein in the 2nd section; belongs to the EPSP synthase family. This sequence in the 3rd section; belongs to the shikimate kinase family. In the 4th section; belongs to the type-I 3-dehydroquinase family. It in the C-terminal section; belongs to the shikimate dehydrogenase family. Homodimer. Zn(2+) is required as a cofactor.

It is found in the cytoplasm. The catalysed reaction is 7-phospho-2-dehydro-3-deoxy-D-arabino-heptonate = 3-dehydroquinate + phosphate. The enzyme catalyses 3-dehydroquinate = 3-dehydroshikimate + H2O. It carries out the reaction shikimate + NADP(+) = 3-dehydroshikimate + NADPH + H(+). It catalyses the reaction shikimate + ATP = 3-phosphoshikimate + ADP + H(+). The catalysed reaction is 3-phosphoshikimate + phosphoenolpyruvate = 5-O-(1-carboxyvinyl)-3-phosphoshikimate + phosphate. It functions in the pathway metabolic intermediate biosynthesis; chorismate biosynthesis; chorismate from D-erythrose 4-phosphate and phosphoenolpyruvate: step 2/7. It participates in metabolic intermediate biosynthesis; chorismate biosynthesis; chorismate from D-erythrose 4-phosphate and phosphoenolpyruvate: step 3/7. Its pathway is metabolic intermediate biosynthesis; chorismate biosynthesis; chorismate from D-erythrose 4-phosphate and phosphoenolpyruvate: step 4/7. The protein operates within metabolic intermediate biosynthesis; chorismate biosynthesis; chorismate from D-erythrose 4-phosphate and phosphoenolpyruvate: step 5/7. It functions in the pathway metabolic intermediate biosynthesis; chorismate biosynthesis; chorismate from D-erythrose 4-phosphate and phosphoenolpyruvate: step 6/7. The AROM polypeptide catalyzes 5 consecutive enzymatic reactions in prechorismate polyaromatic amino acid biosynthesis. The protein is Pentafunctional AROM polypeptide of Yarrowia lipolytica (strain CLIB 122 / E 150) (Yeast).